Reading from the N-terminus, the 105-residue chain is MAFIKSLLIASVAAVAFAAPQGGASDNNKKVEIDGQDSAPVCGNGQKVACCNSGEDLIGLNCLSIPILAIPIQKACGSNIAACCQTGDSEGNLLNLEANCLAIPL.

A signal peptide spans 1-18 (MAFIKSLLIASVAAVAFA). 4 disulfide bridges follow: C42–C83, C50–C76, C51–C62, and C84–C100.

It belongs to the fungal hydrophobin family. In terms of assembly, self-assembles to form functional amyloid fibrils called rodlets. Self-assembly into fibrillar rodlets occurs spontaneously at hydrophobic:hydrophilic interfaces and the rodlets further associate laterally to form amphipathic monolayers.

It localises to the secreted. Its subcellular location is the cell wall. Functionally, aerial growth, conidiation, and dispersal of filamentous fungi in the environment rely upon a capability of their secreting small amphipathic proteins called hydrophobins (HPBs) with low sequence identity. Class I can self-assemble into an outermost layer of rodlet bundles on aerial cell surfaces, conferring cellular hydrophobicity that supports fungal growth, development and dispersal; whereas Class II form highly ordered films at water-air interfaces through intermolecular interactions but contribute nothing to the rodlet structure. This Davidiella tassiana (Mycosphaerella tassiana) protein is Class I hydrophobin 1.